A 146-amino-acid chain; its full sequence is 3-hydroxyacyl-[acyl-carrier-protein] dehydratase FabZ (146 aa).

Histidine 46 is a catalytic residue.

It belongs to the thioester dehydratase family. FabZ subfamily.

It localises to the cytoplasm. The catalysed reaction is a (3R)-hydroxyacyl-[ACP] = a (2E)-enoyl-[ACP] + H2O. In terms of biological role, involved in unsaturated fatty acids biosynthesis. Catalyzes the dehydration of short chain beta-hydroxyacyl-ACPs and long chain saturated and unsaturated beta-hydroxyacyl-ACPs. The protein is 3-hydroxyacyl-[acyl-carrier-protein] dehydratase FabZ of Acinetobacter baumannii (strain ATCC 17978 / DSM 105126 / CIP 53.77 / LMG 1025 / NCDC KC755 / 5377).